The following is a 427-amino-acid chain: Enolase (427 aa).

Q163 serves as a coordination point for (2R)-2-phosphoglycerate. E205 acts as the Proton donor in catalysis. 3 residues coordinate Mg(2+): D242, E288, and D315. Residues K340, R369, S370, and K391 each coordinate (2R)-2-phosphoglycerate. Catalysis depends on K340, which acts as the Proton acceptor.

Belongs to the enolase family. The cofactor is Mg(2+).

It localises to the cytoplasm. Its subcellular location is the secreted. It is found in the cell surface. The catalysed reaction is (2R)-2-phosphoglycerate = phosphoenolpyruvate + H2O. It functions in the pathway carbohydrate degradation; glycolysis; pyruvate from D-glyceraldehyde 3-phosphate: step 4/5. Its function is as follows. Catalyzes the reversible conversion of 2-phosphoglycerate (2-PG) into phosphoenolpyruvate (PEP). It is essential for the degradation of carbohydrates via glycolysis. In Cytophaga hutchinsonii (strain ATCC 33406 / DSM 1761 / CIP 103989 / NBRC 15051 / NCIMB 9469 / D465), this protein is Enolase.